The following is a 172-amino-acid chain: Protein GrpE (172 aa).

The segment at 1–23 (MNQDHPECDSEELTQNSPETDPL) is disordered.

The protein belongs to the GrpE family. Homodimer.

The protein resides in the cytoplasm. Its function is as follows. Participates actively in the response to hyperosmotic and heat shock by preventing the aggregation of stress-denatured proteins, in association with DnaK and GrpE. It is the nucleotide exchange factor for DnaK and may function as a thermosensor. Unfolded proteins bind initially to DnaJ; upon interaction with the DnaJ-bound protein, DnaK hydrolyzes its bound ATP, resulting in the formation of a stable complex. GrpE releases ADP from DnaK; ATP binding to DnaK triggers the release of the substrate protein, thus completing the reaction cycle. Several rounds of ATP-dependent interactions between DnaJ, DnaK and GrpE are required for fully efficient folding. This is Protein GrpE from Xylella fastidiosa (strain M23).